We begin with the raw amino-acid sequence, 396 residues long: 8-amino-7-oxononanoate synthase (396 aa).

Position 21 (Arg21) interacts with substrate. A pyridoxal 5'-phosphate-binding site is contributed by 112 to 113 (GY). Residue His137 coordinates substrate. Positions 183, 211, and 239 each coordinate pyridoxal 5'-phosphate. Position 242 is an N6-(pyridoxal phosphate)lysine (Lys242). Position 358 (Thr358) interacts with substrate.

This sequence belongs to the class-II pyridoxal-phosphate-dependent aminotransferase family. BioF subfamily. As to quaternary structure, homodimer. Pyridoxal 5'-phosphate is required as a cofactor.

The enzyme catalyses 6-carboxyhexanoyl-[ACP] + L-alanine + H(+) = (8S)-8-amino-7-oxononanoate + holo-[ACP] + CO2. The protein operates within cofactor biosynthesis; biotin biosynthesis. Its function is as follows. Catalyzes the decarboxylative condensation of pimeloyl-[acyl-carrier protein] and L-alanine to produce 8-amino-7-oxononanoate (AON), [acyl-carrier protein], and carbon dioxide. The protein is 8-amino-7-oxononanoate synthase of Bordetella petrii (strain ATCC BAA-461 / DSM 12804 / CCUG 43448).